Here is a 500-residue protein sequence, read N- to C-terminus: NAD(P)H-quinone oxidoreductase chain 4, chloroplastic (500 aa).

The next 14 membrane-spanning stretches (helical) occupy residues 4–24 (FPWL…IFFL), 31–51 (VIFW…TYAF), 84–104 (GLSI…TLAA), 111–131 (ARLF…LFSC), 134–154 (LLLF…LLSM), 167–187 (FILY…GIGL), 212–232 (IFYI…PLHT), 242–262 (HYST…YGLV), 272–292 (AHSL…IYAA), 308–328 (SSVS…DIGL), 330–350 (GALL…FLAG), 386–406 (LALP…GLIT), 411–431 (LLMA…LTPI), and 462–482 (LFLS…PDFV).

The protein belongs to the complex I subunit 4 family.

It localises to the plastid. It is found in the chloroplast thylakoid membrane. It carries out the reaction a plastoquinone + NADH + (n+1) H(+)(in) = a plastoquinol + NAD(+) + n H(+)(out). The catalysed reaction is a plastoquinone + NADPH + (n+1) H(+)(in) = a plastoquinol + NADP(+) + n H(+)(out). This is NAD(P)H-quinone oxidoreductase chain 4, chloroplastic from Jasminum nudiflorum (Winter jasmine).